Here is a 313-residue protein sequence, read N- to C-terminus: Methionyl-tRNA formyltransferase (313 aa).

112–115 provides a ligand contact to (6S)-5,6,7,8-tetrahydrofolate; it reads SLLP.

This sequence belongs to the Fmt family.

The enzyme catalyses L-methionyl-tRNA(fMet) + (6R)-10-formyltetrahydrofolate = N-formyl-L-methionyl-tRNA(fMet) + (6S)-5,6,7,8-tetrahydrofolate + H(+). Attaches a formyl group to the free amino group of methionyl-tRNA(fMet). The formyl group appears to play a dual role in the initiator identity of N-formylmethionyl-tRNA by promoting its recognition by IF2 and preventing the misappropriation of this tRNA by the elongation apparatus. This Geotalea uraniireducens (strain Rf4) (Geobacter uraniireducens) protein is Methionyl-tRNA formyltransferase.